The sequence spans 285 residues: UPF0354 protein SH1179 (285 aa).

This sequence belongs to the UPF0354 family.

The protein is UPF0354 protein SH1179 of Staphylococcus haemolyticus (strain JCSC1435).